The primary structure comprises 267 residues: Aliphatic sulfonates import ATP-binding protein SsuB 1 (267 aa).

In terms of domain architecture, ABC transporter spans 35-249; it reads VRVRGLRRVF…RRADPAFDRL (215 aa). 67 to 74 is a binding site for ATP; that stretch reads GRSGSGKS.

This sequence belongs to the ABC transporter superfamily. Aliphatic sulfonates importer (TC 3.A.1.17.2) family. As to quaternary structure, the complex is composed of two ATP-binding proteins (SsuB), two transmembrane proteins (SsuC) and a solute-binding protein (SsuA).

The protein resides in the cell membrane. The catalysed reaction is ATP + H2O + aliphatic sulfonate-[sulfonate-binding protein]Side 1 = ADP + phosphate + aliphatic sulfonateSide 2 + [sulfonate-binding protein]Side 1.. Its function is as follows. Part of the ABC transporter complex SsuABC involved in aliphatic sulfonates import. Responsible for energy coupling to the transport system. The chain is Aliphatic sulfonates import ATP-binding protein SsuB 1 from Frankia alni (strain DSM 45986 / CECT 9034 / ACN14a).